Reading from the N-terminus, the 338-residue chain is Glyceraldehyde-3-phosphate dehydrogenase (338 aa).

Residues 13-14, Asp-35, and Arg-80 contribute to the NAD(+) site; that span reads RI. D-glyceraldehyde 3-phosphate-binding positions include 151 to 153, Thr-182, 211 to 212, and Arg-234; these read SCT and TG. Residue Cys-152 is the Nucleophile of the active site. Asn-317 is a binding site for NAD(+).

This sequence belongs to the glyceraldehyde-3-phosphate dehydrogenase family. Homotetramer.

The protein localises to the cytoplasm. It catalyses the reaction D-glyceraldehyde 3-phosphate + phosphate + NAD(+) = (2R)-3-phospho-glyceroyl phosphate + NADH + H(+). Its pathway is carbohydrate degradation; glycolysis; pyruvate from D-glyceraldehyde 3-phosphate: step 1/5. The polypeptide is Glyceraldehyde-3-phosphate dehydrogenase (gpdA) (Aspergillus oryzae (strain ATCC 42149 / RIB 40) (Yellow koji mold)).